Reading from the N-terminus, the 526-residue chain is Bifunctional purine biosynthesis protein PurH (526 aa).

Residues 15-161 enclose the MGS-like domain; it reads DVVPIRRALI…KNHANVAIVV (147 aa).

Belongs to the PurH family.

The enzyme catalyses (6R)-10-formyltetrahydrofolate + 5-amino-1-(5-phospho-beta-D-ribosyl)imidazole-4-carboxamide = 5-formamido-1-(5-phospho-D-ribosyl)imidazole-4-carboxamide + (6S)-5,6,7,8-tetrahydrofolate. It carries out the reaction IMP + H2O = 5-formamido-1-(5-phospho-D-ribosyl)imidazole-4-carboxamide. Its pathway is purine metabolism; IMP biosynthesis via de novo pathway; 5-formamido-1-(5-phospho-D-ribosyl)imidazole-4-carboxamide from 5-amino-1-(5-phospho-D-ribosyl)imidazole-4-carboxamide (10-formyl THF route): step 1/1. It participates in purine metabolism; IMP biosynthesis via de novo pathway; IMP from 5-formamido-1-(5-phospho-D-ribosyl)imidazole-4-carboxamide: step 1/1. The protein is Bifunctional purine biosynthesis protein PurH of Leifsonia xyli subsp. xyli (strain CTCB07).